We begin with the raw amino-acid sequence, 1368 residues long: DNA-directed RNA polymerase subunit beta' (1368 aa).

The segment at 1–38 (MTSSSKPARKTSKSKSKASKAAEAPAAPSNELSREAPT) is disordered. Positions 7–18 (PARKTSKSKSKA) are enriched in basic residues. The segment covering 19–29 (SKAAEAPAAPS) has biased composition (low complexity). Cysteine 250, cysteine 318, cysteine 325, and cysteine 328 together coordinate Zn(2+). The tract at residues 1340-1368 (AGEELAEEHVPDPGALEGLQEEGLLSQDS) is disordered. Over residues 1353 to 1368 (GALEGLQEEGLLSQDS) the composition is skewed to low complexity.

Belongs to the RNA polymerase beta' chain family. RpoC2 subfamily. In terms of assembly, in cyanobacteria the RNAP catalytic core is composed of 2 alpha, 1 beta, 1 beta', 1 gamma and 1 omega subunit. When a sigma factor is associated with the core the holoenzyme is formed, which can initiate transcription. Zn(2+) serves as cofactor.

The enzyme catalyses RNA(n) + a ribonucleoside 5'-triphosphate = RNA(n+1) + diphosphate. DNA-dependent RNA polymerase catalyzes the transcription of DNA into RNA using the four ribonucleoside triphosphates as substrates. This Synechococcus sp. (strain RCC307) protein is DNA-directed RNA polymerase subunit beta'.